The primary structure comprises 502 residues: Glycerol kinase (502 aa).

Thr-14 is a binding site for ADP. ATP-binding residues include Thr-14, Thr-15, and Ser-16. Sn-glycerol 3-phosphate is bound at residue Thr-14. Arg-18 contributes to the ADP binding site. Sn-glycerol 3-phosphate is bound by residues Arg-84, Glu-85, and Tyr-136. Glycerol contacts are provided by Arg-84, Glu-85, and Tyr-136. His-232 carries the phosphohistidine; by HPr modification. Position 246 (Asp-246) interacts with sn-glycerol 3-phosphate. Glycerol contacts are provided by Asp-246 and Gln-247. The ADP site is built by Thr-268 and Gly-311. 4 residues coordinate ATP: Thr-268, Gly-311, Gln-315, and Gly-412. 2 residues coordinate ADP: Gly-412 and Asn-416.

It belongs to the FGGY kinase family. As to quaternary structure, homotetramer and homodimer (in equilibrium). Post-translationally, the phosphoenolpyruvate-dependent sugar phosphotransferase system (PTS), including enzyme I, and histidine-containing protein (HPr) are required for the phosphorylation, which leads to the activation of the enzyme.

The enzyme catalyses glycerol + ATP = sn-glycerol 3-phosphate + ADP + H(+). Its pathway is polyol metabolism; glycerol degradation via glycerol kinase pathway; sn-glycerol 3-phosphate from glycerol: step 1/1. Its activity is regulated as follows. Activated by phosphorylation and inhibited by fructose 1,6-bisphosphate (FBP). Key enzyme in the regulation of glycerol uptake and metabolism. Catalyzes the phosphorylation of glycerol to yield sn-glycerol 3-phosphate. The polypeptide is Glycerol kinase (Streptococcus gordonii (strain Challis / ATCC 35105 / BCRC 15272 / CH1 / DL1 / V288)).